A 260-amino-acid polypeptide reads, in one-letter code: Taurine import ATP-binding protein TauB (260 aa).

An ABC transporter domain is found at 6–235 (AHQVSVVYAS…RYAAGESMRS (230 aa)). Residue 40 to 47 (GASGCGKS) participates in ATP binding.

It belongs to the ABC transporter superfamily. Taurine importer (TC 3.A.1.17.1) family. As to quaternary structure, the complex is composed of two ATP-binding proteins (TauB), two transmembrane proteins (TauC) and a solute-binding protein (TauA).

The protein resides in the cell inner membrane. The catalysed reaction is taurine(out) + ATP + H2O = taurine(in) + ADP + phosphate + H(+). Its function is as follows. Part of the ABC transporter complex TauABC involved in taurine import. Responsible for energy coupling to the transport system. This Burkholderia thailandensis (strain ATCC 700388 / DSM 13276 / CCUG 48851 / CIP 106301 / E264) protein is Taurine import ATP-binding protein TauB.